The following is a 62-amino-acid chain: Ribulose bisphosphate carboxylase/oxygenase activase, chloroplastic (62 aa).

Belongs to the RuBisCO activase family.

It is found in the plastid. Its subcellular location is the chloroplast stroma. Activation of RuBisCO (ribulose-1,5-bisphosphate carboxylase/oxygenase; EC 4.1.1.39) involves the ATP-dependent carboxylation of the epsilon-amino group of lysine leading to a carbamate structure. The protein is Ribulose bisphosphate carboxylase/oxygenase activase, chloroplastic of Vitis sp. (Grape).